A 335-amino-acid polypeptide reads, in one-letter code: Mitochondrial fission regulator 1 (335 aa).

Residues 1 to 48 (MIRWFKCFMRMIFEQVGLNMESVLWSSKPYGSSRSIVRKIGTNLSLIQ) constitute a mitochondrion transit peptide. A coiled-coil region spans residues 134 to 170 (RSTVIANEEAMQKISALENELATLRAQIAKIVILQEQ). The tract at residues 182 to 309 (ASAAVPCVPP…DKVIPKSETN (128 aa)) is necessary and sufficient to promote mitochondrial fission. A disordered region spans residues 219–240 (RKNRKTNSGPIPTENGPKKPEI).

The protein belongs to the MTFR1 family. As to expression, widely expressed in embryonic tissues with higher expression in cartilage and hypertrophic chondrocytes. Specifically expressed in hypertrophic chondrocytes (at protein level).

It localises to the mitochondrion. May play a role in mitochondrial aerobic respiration. May also regulate mitochondrial organization and fission. This chain is Mitochondrial fission regulator 1 (MTFR1), found in Gallus gallus (Chicken).